Reading from the N-terminus, the 322-residue chain is Lipoyl synthase (322 aa).

The segment covering 1–25 (MSQRITIDHRSAPALRHPEKAHRPD) has biased composition (basic and acidic residues). Positions 1–29 (MSQRITIDHRSAPALRHPEKAHRPDNPIQ) are disordered. The [4Fe-4S] cluster site is built by Cys61, Cys66, Cys72, Cys87, Cys91, Cys94, and Ser300. The Radical SAM core domain maps to 73–289 (WSQRHATMMI…AAAARSKGFL (217 aa)).

Belongs to the radical SAM superfamily. Lipoyl synthase family. [4Fe-4S] cluster is required as a cofactor.

It is found in the cytoplasm. The catalysed reaction is [[Fe-S] cluster scaffold protein carrying a second [4Fe-4S](2+) cluster] + N(6)-octanoyl-L-lysyl-[protein] + 2 oxidized [2Fe-2S]-[ferredoxin] + 2 S-adenosyl-L-methionine + 4 H(+) = [[Fe-S] cluster scaffold protein] + N(6)-[(R)-dihydrolipoyl]-L-lysyl-[protein] + 4 Fe(3+) + 2 hydrogen sulfide + 2 5'-deoxyadenosine + 2 L-methionine + 2 reduced [2Fe-2S]-[ferredoxin]. Its pathway is protein modification; protein lipoylation via endogenous pathway; protein N(6)-(lipoyl)lysine from octanoyl-[acyl-carrier-protein]: step 2/2. In terms of biological role, catalyzes the radical-mediated insertion of two sulfur atoms into the C-6 and C-8 positions of the octanoyl moiety bound to the lipoyl domains of lipoate-dependent enzymes, thereby converting the octanoylated domains into lipoylated derivatives. The sequence is that of Lipoyl synthase from Gluconobacter oxydans (strain 621H) (Gluconobacter suboxydans).